We begin with the raw amino-acid sequence, 289 residues long: Shikimate dehydrogenase (NADP(+)) (289 aa).

Shikimate-binding positions include 19 to 21 and T66; that span reads SMS. The Proton acceptor role is filled by K70. Residues N91 and D106 each contribute to the shikimate site. Residues 131-135, 155-160, and L229 contribute to the NADP(+) site; these read GAGGA and NRTLKK. Position 231 (Y231) interacts with shikimate. G252 contacts NADP(+).

Belongs to the shikimate dehydrogenase family. As to quaternary structure, homodimer.

The catalysed reaction is shikimate + NADP(+) = 3-dehydroshikimate + NADPH + H(+). It participates in metabolic intermediate biosynthesis; chorismate biosynthesis; chorismate from D-erythrose 4-phosphate and phosphoenolpyruvate: step 4/7. Involved in the biosynthesis of the chorismate, which leads to the biosynthesis of aromatic amino acids. Catalyzes the reversible NADPH linked reduction of 3-dehydroshikimate (DHSA) to yield shikimate (SA). In Halothermothrix orenii (strain H 168 / OCM 544 / DSM 9562), this protein is Shikimate dehydrogenase (NADP(+)).